The following is a 356-amino-acid chain: MEYQRYKTRQIKVGDVLIGGDAPISVQSMLFTKTRDVEGCLEQLNRLYFAGANIVRLACLDMADARALKEIKAKSPLPLIVDIHFNHKLAVFCAEFIDGVRINPGNIGSKENIKEVVQACKQRKIPIRIGVNHGSIEKQFSDKYGYNIEAMLGSALYNIKLLEDLDFFDIKISMKTSDVQNTIKAYEALRPLCDYPFHLGVTEAGTKFHSTVKSSIALGNLLLKGIGDTMRVSMTGELEEEIRVARAILQDSGVQKSGVNIISCPTCGRIQSDLIKAIKIVEEKTKHIKEPLNISVMGCVVNALGEAKGADVAIAFGKNQGLVIRHGEVVAKLKEDELVDRFLLEVEDEVKLREKD.

4 residues coordinate [4Fe-4S] cluster: C264, C267, C299, and E306.

The protein belongs to the IspG family. [4Fe-4S] cluster serves as cofactor.

The catalysed reaction is (2E)-4-hydroxy-3-methylbut-2-enyl diphosphate + oxidized [flavodoxin] + H2O + 2 H(+) = 2-C-methyl-D-erythritol 2,4-cyclic diphosphate + reduced [flavodoxin]. It participates in isoprenoid biosynthesis; isopentenyl diphosphate biosynthesis via DXP pathway; isopentenyl diphosphate from 1-deoxy-D-xylulose 5-phosphate: step 5/6. In terms of biological role, converts 2C-methyl-D-erythritol 2,4-cyclodiphosphate (ME-2,4cPP) into 1-hydroxy-2-methyl-2-(E)-butenyl 4-diphosphate. This Campylobacter lari (strain RM2100 / D67 / ATCC BAA-1060) protein is 4-hydroxy-3-methylbut-2-en-1-yl diphosphate synthase (flavodoxin).